A 315-amino-acid polypeptide reads, in one-letter code: Melanocyte-stimulating hormone receptor (315 aa).

The Extracellular portion of the chain corresponds to 1–35 (MSTQEPQKSLLGSLNSNATSHLGLATNQSEPWCLY). 2 N-linked (GlcNAc...) asparagine glycosylation sites follow: N17 and N27. A helical membrane pass occupies residues 36 to 61 (VSIPDGLFLSLGLVSLVENVLVVIAI). The Cytoplasmic segment spans residues 62 to 70 (TKNRNLHSP). The helical transmembrane segment at 71-91 (MYYFICCLALSDLMVSVSIVL) threads the bilayer. The Extracellular segment spans residues 92 to 116 (ETTIILLLEAGILVARVALVQQLDN). A helical transmembrane segment spans residues 117-138 (LIDVLICGSMVSSLCFLGIIAI). Residues 139 to 161 (DRYISIFYALRYHSIVTLPRARR) are Cytoplasmic-facing. A helical membrane pass occupies residues 162 to 181 (AVVGIWMVSIVSSTLFITYY). The Extracellular portion of the chain corresponds to 182–189 (KHTAVLLC). A helical transmembrane segment spans residues 190-209 (LVTFFLAMLALMAILYAHMF). At 210–238 (TRACQHAQGIAQLHKRRRSIRQGFCLKGA) the chain is on the cytoplasmic side. A helical transmembrane segment spans residues 239–264 (ATLTILLGIFFLCWGPFFLHLLLIVL). Residues 265 to 277 (CPQHPTCSCIFKN) lie on the Extracellular side of the membrane. The chain crosses the membrane as a helical span at residues 278-298 (FNLFLLLIVLSSTVDPLIYAF). The Cytoplasmic segment spans residues 299-315 (RSQELRMTLKEVLLCSW). C313 carries S-palmitoyl cysteine lipidation.

The protein belongs to the G-protein coupled receptor 1 family. Interacts with MGRN1, but does not undergo MGRN1-mediated ubiquitination; this interaction competes with GNAS-binding and thus inhibits agonist-induced cAMP production. Interacts with OPN3; the interaction results in a decrease in MC1R-mediated cAMP signaling and ultimately a decrease in melanin production in melanocytes.

Its subcellular location is the cell membrane. Receptor for MSH (alpha, beta and gamma) and ACTH. The activity of this receptor is mediated by G proteins which activate adenylate cyclase. Mediates melanogenesis, the production of eumelanin (black/brown) and phaeomelanin (red/yellow), via regulation of cAMP signaling in melanocytes. The sequence is that of Melanocyte-stimulating hormone receptor (Mc1r) from Mus musculus (Mouse).